A 258-amino-acid polypeptide reads, in one-letter code: Snake venom serine protease KN13 (258 aa).

An N-terminal signal peptide occupies residues 1–18 (MVLIRVLANLLILQLSYA). Positions 19–24 (QRSSEL) are excised as a propeptide. Positions 25 to 249 (VIGGDECNIN…HLDWIQNIIA (225 aa)) constitute a Peptidase S1 domain. Cystine bridges form between Cys-31/Cys-163, Cys-50/Cys-66, Cys-98/Cys-256, Cys-142/Cys-210, Cys-174/Cys-189, and Cys-200/Cys-225. Catalysis depends on His-65, which acts as the Charge relay system. An N-linked (GlcNAc...) asparagine glycan is attached at Asn-103. The active-site Charge relay system is Asp-110. N-linked (GlcNAc...) asparagine glycosylation is found at Asn-121, Asn-122, Asn-154, and Asn-170. The active-site Charge relay system is the Ser-204. Residue Asn-251 is glycosylated (N-linked (GlcNAc...) asparagine).

This sequence belongs to the peptidase S1 family. Snake venom subfamily. Monomer. In terms of tissue distribution, expressed by the venom gland.

It localises to the secreted. Snake venom serine protease that may act in the hemostasis system of the prey. This Trimeresurus stejnegeri (Chinese green tree viper) protein is Snake venom serine protease KN13.